The sequence spans 290 residues: Arylamine N-acetyltransferase 1 (290 aa).

Position 1 is an N-acetylmethionine (Met-1). Ser-103 contributes to the CoA binding site. Residue 106–107 (IH) coordinates substrate. Tyr-208 serves as a coordination point for CoA.

Belongs to the arylamine N-acetyltransferase family.

The protein resides in the cytoplasm. It catalyses the reaction an arylamine + acetyl-CoA = an N-acetylarylamine + CoA. In terms of biological role, participates in the detoxification of a plethora of hydrazine and arylamine drugs. This Bos taurus (Bovine) protein is Arylamine N-acetyltransferase 1 (NAT1).